A 367-amino-acid polypeptide reads, in one-letter code: Homoserine O-acetyltransferase (367 aa).

Residues 44 to 350 (NAIMVTHAWT…AYGHDAFLLE (307 aa)) form the AB hydrolase-1 domain. The Nucleophile role is filled by S150. A substrate-binding site is contributed by R217. Active-site residues include D311 and H344. A substrate-binding site is contributed by D345.

This sequence belongs to the AB hydrolase superfamily. MetX family. Homodimer.

It is found in the cytoplasm. The catalysed reaction is L-homoserine + acetyl-CoA = O-acetyl-L-homoserine + CoA. The protein operates within amino-acid biosynthesis; L-methionine biosynthesis via de novo pathway; O-acetyl-L-homoserine from L-homoserine: step 1/1. Transfers an acetyl group from acetyl-CoA to L-homoserine, forming acetyl-L-homoserine. This chain is Homoserine O-acetyltransferase, found in Geotalea daltonii (strain DSM 22248 / JCM 15807 / FRC-32) (Geobacter daltonii).